The sequence spans 344 residues: Type II methyltransferase M.FnuDI (344 aa).

Residues 1–330 form the SAM-dependent MTase C5-type domain; it reads MKLLSLFSGA…KRIKETLTDK (330 aa). The active site involves Cys71.

The protein belongs to the class I-like SAM-binding methyltransferase superfamily. C5-methyltransferase family.

The enzyme catalyses a 2'-deoxycytidine in DNA + S-adenosyl-L-methionine = a 5-methyl-2'-deoxycytidine in DNA + S-adenosyl-L-homocysteine + H(+). Functionally, a methylase, recognizes the double-stranded sequence 5'-GGCC-3', methylates C-? on both strands, and protects the DNA from cleavage by the FnuDI endonuclease. In Fusobacterium nucleatum, this protein is Type II methyltransferase M.FnuDI (fnuDIM).